A 213-amino-acid polypeptide reads, in one-letter code: Superoxide dismutase [Fe] (213 aa).

Residues H28, H82, D164, and H168 each coordinate Fe cation.

Belongs to the iron/manganese superoxide dismutase family. As to quaternary structure, homotetramer. Fe cation is required as a cofactor.

It carries out the reaction 2 superoxide + 2 H(+) = H2O2 + O2. Destroys superoxide anion radicals which are normally produced within the cells and which are toxic to biological systems. The protein is Superoxide dismutase [Fe] (sodB) of Aquifex pyrophilus.